The chain runs to 101 residues: Urease subunit beta (101 aa).

This sequence belongs to the urease beta subunit family. In terms of assembly, heterotrimer of UreA (gamma), UreB (beta) and UreC (alpha) subunits. Three heterotrimers associate to form the active enzyme.

It is found in the cytoplasm. It catalyses the reaction urea + 2 H2O + H(+) = hydrogencarbonate + 2 NH4(+). The protein operates within nitrogen metabolism; urea degradation; CO(2) and NH(3) from urea (urease route): step 1/1. In Granulibacter bethesdensis (strain ATCC BAA-1260 / CGDNIH1), this protein is Urease subunit beta.